The primary structure comprises 540 residues: 2-isopropylmalate synthase (540 aa).

Residues 8–269 enclose the Pyruvate carboxyltransferase domain; it reads VLIFDTTLRD…YFNPFFGREP (262 aa). Residues Asp17, His208, His210, and Asn244 each contribute to the Mn(2+) site. Positions 408–540 are regulatory domain; that stretch reads QLRLVQVSCG…AVLADLRSGI (133 aa).

Belongs to the alpha-IPM synthase/homocitrate synthase family. LeuA type 1 subfamily. Homodimer. It depends on Mn(2+) as a cofactor.

It localises to the cytoplasm. The enzyme catalyses 3-methyl-2-oxobutanoate + acetyl-CoA + H2O = (2S)-2-isopropylmalate + CoA + H(+). It functions in the pathway amino-acid biosynthesis; L-leucine biosynthesis; L-leucine from 3-methyl-2-oxobutanoate: step 1/4. Functionally, catalyzes the condensation of the acetyl group of acetyl-CoA with 3-methyl-2-oxobutanoate (2-ketoisovalerate) to form 3-carboxy-3-hydroxy-4-methylpentanoate (2-isopropylmalate). The protein is 2-isopropylmalate synthase of Prochlorococcus marinus (strain MIT 9313).